An 88-amino-acid chain; its full sequence is Large ribosomal subunit protein bL27 (88 aa).

Positions Met1–Val23 are disordered. Residues Thr7–Gln19 show a composition bias toward polar residues.

The protein belongs to the bacterial ribosomal protein bL27 family.

This Synechococcus elongatus (strain ATCC 33912 / PCC 7942 / FACHB-805) (Anacystis nidulans R2) protein is Large ribosomal subunit protein bL27 (rpmA).